The chain runs to 910 residues: Protein translocase subunit SecA (910 aa).

Residues Gln-87, 105–109 (GEGKT), and Asp-512 each bind ATP. Composition is skewed to basic and acidic residues over residues 561-571 (RHESRRIDNQL), 841-853 (EEER…ELAR), and 880-890 (TFEREARKVGR). 2 disordered regions span residues 561 to 584 (RHES…AGSS) and 835 to 910 (EEVD…GKIN). Positions 894, 896, 905, and 906 each coordinate Zn(2+). The segment covering 900 to 910 (KKYKQCHGKIN) has biased composition (basic residues).

The protein belongs to the SecA family. In terms of assembly, monomer and homodimer. Part of the essential Sec protein translocation apparatus which comprises SecA, SecYEG and auxiliary proteins SecDF-YajC and YidC. Zn(2+) is required as a cofactor.

It localises to the cell inner membrane. It is found in the cytoplasm. The catalysed reaction is ATP + H2O + cellular proteinSide 1 = ADP + phosphate + cellular proteinSide 2.. In terms of biological role, part of the Sec protein translocase complex. Interacts with the SecYEG preprotein conducting channel. Has a central role in coupling the hydrolysis of ATP to the transfer of proteins into and across the cell membrane, serving both as a receptor for the preprotein-SecB complex and as an ATP-driven molecular motor driving the stepwise translocation of polypeptide chains across the membrane. In Photobacterium profundum (strain SS9), this protein is Protein translocase subunit SecA.